A 168-amino-acid polypeptide reads, in one-letter code: Small ribosomal subunit protein uS5 (168 aa).

Residues 11–74 (YSEKVVKIDR…ESAKKHLVKI (64 aa)) enclose the S5 DRBM domain.

This sequence belongs to the universal ribosomal protein uS5 family. In terms of assembly, part of the 30S ribosomal subunit. Contacts proteins S4 and S8.

With S4 and S12 plays an important role in translational accuracy. Its function is as follows. Located at the back of the 30S subunit body where it stabilizes the conformation of the head with respect to the body. This is Small ribosomal subunit protein uS5 from Leptospira interrogans serogroup Icterohaemorrhagiae serovar copenhageni (strain Fiocruz L1-130).